The sequence spans 94 residues: Large ribosomal subunit protein bL27 (94 aa).

The propeptide occupies Met-1 to Phe-9.

It belongs to the bacterial ribosomal protein bL27 family. Part of the 50S ribosomal subunit. Post-translationally, the N-terminus is cleaved by ribosomal processing cysteine protease Prp.

Functionally, plays a role in sporulation at high temperatures. In Bacillus subtilis (strain 168), this protein is Large ribosomal subunit protein bL27 (rpmA).